The following is a 279-amino-acid chain: Pantothenate synthetase (279 aa).

26–33 (MGNLHDGH) contacts ATP. Catalysis depends on His-33, which acts as the Proton donor. (R)-pantoate is bound at residue Gln-57. Gln-57 provides a ligand contact to beta-alanine. Residue 144–147 (GKKD) participates in ATP binding. Residue Gln-150 participates in (R)-pantoate binding. ATP is bound by residues Val-173 and 181–184 (LSSR).

Belongs to the pantothenate synthetase family. Homodimer.

The protein localises to the cytoplasm. It carries out the reaction (R)-pantoate + beta-alanine + ATP = (R)-pantothenate + AMP + diphosphate + H(+). It functions in the pathway cofactor biosynthesis; (R)-pantothenate biosynthesis; (R)-pantothenate from (R)-pantoate and beta-alanine: step 1/1. Its function is as follows. Catalyzes the condensation of pantoate with beta-alanine in an ATP-dependent reaction via a pantoyl-adenylate intermediate. In Burkholderia mallei (strain NCTC 10229), this protein is Pantothenate synthetase.